A 452-amino-acid chain; its full sequence is UPF0210 protein PTH_0987 (452 aa).

The protein belongs to the UPF0210 family. As to quaternary structure, homodimer.

The sequence is that of UPF0210 protein PTH_0987 from Pelotomaculum thermopropionicum (strain DSM 13744 / JCM 10971 / SI).